Here is a 535-residue protein sequence, read N- to C-terminus: uncharacterized protein (535 aa).

The next 2 helical transmembrane spans lie at 7–27 and 509–529; these read DFDV…AYLA and GGAV…ACLA.

It localises to the cell membrane. This is an uncharacterized protein from Mycobacterium bovis (strain ATCC BAA-935 / AF2122/97).